The chain runs to 119 residues: uncharacterized protein (119 aa).

To Synechocystis PCC 6803 slr0903.

This is an uncharacterized protein from Methanocaldococcus jannaschii (strain ATCC 43067 / DSM 2661 / JAL-1 / JCM 10045 / NBRC 100440) (Methanococcus jannaschii).